The chain runs to 384 residues: Chaperone protein DnaJ (384 aa).

A J domain is found at 5-70 (DYYEVLGVAR…QKKAAYDRFG (66 aa)). Residues 138 to 216 (GAQKTINVPG…CRGAGRVQKE (79 aa)) form a CR-type zinc finger. The Zn(2+) site is built by Cys-151, Cys-154, Cys-168, Cys-171, Cys-190, Cys-193, Cys-204, and Cys-207. CXXCXGXG motif repeat units follow at residues 151 to 158 (CAACNGTG), 168 to 175 (CPTCSGMG), 190 to 197 (CPTCSGHG), and 204 to 211 (CQECRGAG). Residues 300 to 322 (KVPPGTQSGKQLRLRGKGMPPLR) form a disordered region.

The protein belongs to the DnaJ family. Homodimer. Zn(2+) serves as cofactor.

It is found in the cytoplasm. Functionally, participates actively in the response to hyperosmotic and heat shock by preventing the aggregation of stress-denatured proteins and by disaggregating proteins, also in an autonomous, DnaK-independent fashion. Unfolded proteins bind initially to DnaJ; upon interaction with the DnaJ-bound protein, DnaK hydrolyzes its bound ATP, resulting in the formation of a stable complex. GrpE releases ADP from DnaK; ATP binding to DnaK triggers the release of the substrate protein, thus completing the reaction cycle. Several rounds of ATP-dependent interactions between DnaJ, DnaK and GrpE are required for fully efficient folding. Also involved, together with DnaK and GrpE, in the DNA replication of plasmids through activation of initiation proteins. This is Chaperone protein DnaJ from Paracoccus denitrificans (strain Pd 1222).